Reading from the N-terminus, the 160-residue chain is Prostaglandin E synthase 3 (160 aa).

The 90-residue stretch at 1–90 (MQPASAKWYD…ESGQSWPRLT (90 aa)) folds into the CS domain. An N6-acetyllysine modification is found at lysine 33. Lysine 35 participates in a covalent cross-link: Glycyl lysine isopeptide (Lys-Gly) (interchain with G-Cter in SUMO2). At serine 44 the chain carries Phosphoserine. Lysine 65 participates in a covalent cross-link: Glycyl lysine isopeptide (Lys-Gly) (interchain with G-Cter in SUMO2). 4 positions are modified to phosphoserine: serine 85, serine 100, serine 113, and serine 118. A disordered region spans residues 118 to 160 (SNFDRFSEMMDHMGGDEDVDLPEVDGADDDSQDSDDEKMPDLE). Basic and acidic residues predominate over residues 122–132 (RFSEMMDHMGG). Over residues 133 to 153 (DEDVDLPEVDGADDDSQDSDD) the composition is skewed to acidic residues. Serine 148 and serine 151 each carry phosphoserine. The short motif at 157–160 (PDLE) is the PXLE motif element.

The protein belongs to the p23/wos2 family. Probably forms a complex composed of chaperones HSP90 and HSP70, co-chaperones STIP1/HOP, CDC37, PPP5C, PTGES3/p23, TSC1 and client protein TSC2. Binds to the progesterone receptor. Interacts with TERT; the interaction, together with HSP90AA1, is required for correct assembly and stabilization of the telomerase holoenzyme complex. Interacts (via PXLE motif) with EGLN1/PHD2, recruiting EGLN1/PHD2 to the HSP90 pathway to facilitate HIF alpha proteins hydroxylation. Interacts with HSP90AA1, FLCN, FNIP1 and FNIP2. Post-translationally, proteolytically cleaved by caspase-7 (CASP7) in response to apoptosis, leading to its inactivation. Expressed in testis, kidney, bladder and ovary.

The protein resides in the cytoplasm. The catalysed reaction is prostaglandin H2 = prostaglandin E2. It participates in lipid metabolism; prostaglandin biosynthesis. Cytosolic prostaglandin synthase that catalyzes the oxidoreduction of prostaglandin endoperoxide H2 (PGH2) to prostaglandin E2 (PGE2). Molecular chaperone that localizes to genomic response elements in a hormone-dependent manner and disrupts receptor-mediated transcriptional activation, by promoting disassembly of transcriptional regulatory complexes. Facilitates HIF alpha proteins hydroxylation via interaction with EGLN1/PHD2, leading to recruit EGLN1/PHD2 to the HSP90 pathway. The polypeptide is Prostaglandin E synthase 3 (Ptges3) (Mus musculus (Mouse)).